Reading from the N-terminus, the 741-residue chain is 1,4-alpha-glucan branching enzyme GlgB (741 aa).

Residue D420 is the Nucleophile of the active site. E473 functions as the Proton donor in the catalytic mechanism.

The protein belongs to the glycosyl hydrolase 13 family. GlgB subfamily. As to quaternary structure, monomer.

It catalyses the reaction Transfers a segment of a (1-&gt;4)-alpha-D-glucan chain to a primary hydroxy group in a similar glucan chain.. It participates in glycan biosynthesis; glycogen biosynthesis. In terms of biological role, catalyzes the formation of the alpha-1,6-glucosidic linkages in glycogen by scission of a 1,4-alpha-linked oligosaccharide from growing alpha-1,4-glucan chains and the subsequent attachment of the oligosaccharide to the alpha-1,6 position. In Pseudomonas syringae pv. syringae (strain B728a), this protein is 1,4-alpha-glucan branching enzyme GlgB.